Consider the following 221-residue polypeptide: MVKTWEEFLKQEAKQPYFIELMEAVKDARAKGNVYPTEEDMFSCFRLCPYDQVKVVILGQDPYHGPGQAHGLSFSVQKGVRIPPSLRNIYKELKTDLDIEPADHGYLAKWAEQGVLLMNTSWSVEEGKAGSHKKLGWATFTDHVLEELNNYDKPLVFILWGNHAIKAASGITNPQHLLIKGVHPSPLAASRGFFESKPFSKTNAFLEEHGRKPIDWDLNEQ.

Asp61 (proton acceptor) is an active-site residue.

The protein belongs to the uracil-DNA glycosylase (UDG) superfamily. UNG family.

The protein localises to the cytoplasm. It carries out the reaction Hydrolyzes single-stranded DNA or mismatched double-stranded DNA and polynucleotides, releasing free uracil.. Its function is as follows. Excises uracil residues from the DNA which can arise as a result of misincorporation of dUMP residues by DNA polymerase or due to deamination of cytosine. This chain is Uracil-DNA glycosylase 1, found in Listeria monocytogenes serotype 4b (strain F2365).